The sequence spans 307 residues: Putative oxidoreductase YceM (307 aa).

Belongs to the Gfo/Idh/MocA family.

The chain is Putative oxidoreductase YceM (yceM) from Salmonella typhimurium (strain LT2 / SGSC1412 / ATCC 700720).